The chain runs to 201 residues: Peptide deformylase (201 aa).

The Fe cation site is built by Cys-92 and His-134. The active site involves Glu-135. His-138 provides a ligand contact to Fe cation.

Belongs to the polypeptide deformylase family. The cofactor is Fe(2+).

It catalyses the reaction N-terminal N-formyl-L-methionyl-[peptide] + H2O = N-terminal L-methionyl-[peptide] + formate. Its function is as follows. Removes the formyl group from the N-terminal Met of newly synthesized proteins. Requires at least a dipeptide for an efficient rate of reaction. N-terminal L-methionine is a prerequisite for activity but the enzyme has broad specificity at other positions. The chain is Peptide deformylase from Rhodopirellula baltica (strain DSM 10527 / NCIMB 13988 / SH1).